Here is a 344-residue protein sequence, read N- to C-terminus: S-adenosylmethionine:tRNA ribosyltransferase-isomerase (344 aa).

Belongs to the QueA family. Monomer.

The protein resides in the cytoplasm. The enzyme catalyses 7-aminomethyl-7-carbaguanosine(34) in tRNA + S-adenosyl-L-methionine = epoxyqueuosine(34) in tRNA + adenine + L-methionine + 2 H(+). It participates in tRNA modification; tRNA-queuosine biosynthesis. Its function is as follows. Transfers and isomerizes the ribose moiety from AdoMet to the 7-aminomethyl group of 7-deazaguanine (preQ1-tRNA) to give epoxyqueuosine (oQ-tRNA). This is S-adenosylmethionine:tRNA ribosyltransferase-isomerase from Acinetobacter baylyi (strain ATCC 33305 / BD413 / ADP1).